The chain runs to 447 residues: Na(+)-translocating NADH-quinone reductase subunit A (447 aa).

Belongs to the NqrA family. As to quaternary structure, composed of six subunits; NqrA, NqrB, NqrC, NqrD, NqrE and NqrF.

It catalyses the reaction a ubiquinone + n Na(+)(in) + NADH + H(+) = a ubiquinol + n Na(+)(out) + NAD(+). In terms of biological role, NQR complex catalyzes the reduction of ubiquinone-1 to ubiquinol by two successive reactions, coupled with the transport of Na(+) ions from the cytoplasm to the periplasm. NqrA to NqrE are probably involved in the second step, the conversion of ubisemiquinone to ubiquinol. In Yersinia pseudotuberculosis serotype O:1b (strain IP 31758), this protein is Na(+)-translocating NADH-quinone reductase subunit A.